The chain runs to 474 residues: Aspartyl/glutamyl-tRNA(Asn/Gln) amidotransferase subunit B (474 aa).

This sequence belongs to the GatB/GatE family. GatB subfamily. In terms of assembly, heterotrimer of A, B and C subunits.

The enzyme catalyses L-glutamyl-tRNA(Gln) + L-glutamine + ATP + H2O = L-glutaminyl-tRNA(Gln) + L-glutamate + ADP + phosphate + H(+). The catalysed reaction is L-aspartyl-tRNA(Asn) + L-glutamine + ATP + H2O = L-asparaginyl-tRNA(Asn) + L-glutamate + ADP + phosphate + 2 H(+). Functionally, allows the formation of correctly charged Asn-tRNA(Asn) or Gln-tRNA(Gln) through the transamidation of misacylated Asp-tRNA(Asn) or Glu-tRNA(Gln) in organisms which lack either or both of asparaginyl-tRNA or glutaminyl-tRNA synthetases. The reaction takes place in the presence of glutamine and ATP through an activated phospho-Asp-tRNA(Asn) or phospho-Glu-tRNA(Gln). The chain is Aspartyl/glutamyl-tRNA(Asn/Gln) amidotransferase subunit B from Limosilactobacillus fermentum (strain NBRC 3956 / LMG 18251) (Lactobacillus fermentum).